Consider the following 434-residue polypeptide: Trigger factor (434 aa).

In terms of domain architecture, PPIase FKBP-type spans 161–246 (EDRVTVDFSG…LKKVEERELP (86 aa)).

Belongs to the FKBP-type PPIase family. Tig subfamily.

Its subcellular location is the cytoplasm. The enzyme catalyses [protein]-peptidylproline (omega=180) = [protein]-peptidylproline (omega=0). Functionally, involved in protein export. Acts as a chaperone by maintaining the newly synthesized protein in an open conformation. Functions as a peptidyl-prolyl cis-trans isomerase. The protein is Trigger factor of Serratia proteamaculans (strain 568).